Consider the following 298-residue polypeptide: Lipoyl synthase (298 aa).

[4Fe-4S] cluster is bound by residues cysteine 43, cysteine 48, cysteine 54, cysteine 69, cysteine 73, cysteine 76, and serine 280. The Radical SAM core domain maps to 55–269 (FSSGTATFLI…AACGRGMGIP (215 aa)).

Belongs to the radical SAM superfamily. Lipoyl synthase family. [4Fe-4S] cluster serves as cofactor.

It is found in the cytoplasm. The enzyme catalyses [[Fe-S] cluster scaffold protein carrying a second [4Fe-4S](2+) cluster] + N(6)-octanoyl-L-lysyl-[protein] + 2 oxidized [2Fe-2S]-[ferredoxin] + 2 S-adenosyl-L-methionine + 4 H(+) = [[Fe-S] cluster scaffold protein] + N(6)-[(R)-dihydrolipoyl]-L-lysyl-[protein] + 4 Fe(3+) + 2 hydrogen sulfide + 2 5'-deoxyadenosine + 2 L-methionine + 2 reduced [2Fe-2S]-[ferredoxin]. It functions in the pathway protein modification; protein lipoylation via endogenous pathway; protein N(6)-(lipoyl)lysine from octanoyl-[acyl-carrier-protein]: step 2/2. Catalyzes the radical-mediated insertion of two sulfur atoms into the C-6 and C-8 positions of the octanoyl moiety bound to the lipoyl domains of lipoate-dependent enzymes, thereby converting the octanoylated domains into lipoylated derivatives. The chain is Lipoyl synthase from Nitratidesulfovibrio vulgaris (strain DP4) (Desulfovibrio vulgaris).